The sequence spans 1106 residues: Inversin (1106 aa).

16 ANK repeats span residues 13–42 (SLASEVHAAAVNGDKSTLLKLIAGNSELKD), 47–76 (FGRTPLMYCVLADRVDCAEALLKAGADVNR), 80–110 (SRRTALHLAAQKGNYRFMKLLLARRGNWMQK), 113–144 (EGMTPLHLTTRHKSPKCLALLLKHMAPGEVDT), 148–177 (NKQTALHWSAYYNNPEHVKLLIKHDSNIGI), 181–213 (EGKIPLHWAANNKDPSAIHTVKCILEAAPTESL), 220–250 (EGRTPLHFAVADGNVAVVDVLTSYEGCNVTS), 254–285 (LFRTPLHWAALLGHAQIVHLLLERNKFGTIPS), 288–317 (QGATPLHYAAQSNFAETVEVFLKHPSVKDD), 321–350 (EGRTSFMWAAGKGSDNVIRTMLDLKLDIDI), 356–385 (YAGTALHAAALSGHVSTVKLLLERNAQVDA), 389–418 (MKHTPLFRACEMGHKEVIQTLIKGGARVDL), 422–451 (DGHSPLHWAALGGNADVCQILIENKINPNV), 455–484 (AGRTPLQCAAYGGYINCMVVLLENNADPNI), 488–517 (EGRTALHWLCNNGYLDAIKLLLGFDAFPNH), and 523–553 (ERYTPLDYALLGEHHEVIQFMLEHGALSIAA). A D-box 1 motif is present at residues 490-498 (RTALHWLCN). Positions 555-584 (QDIAAFKIQAVYKGYKVRKAFQERKNLLMK) constitute an IQ 1 domain. Residues 589–607 (RKDAAAKKREEESKRKEAS) show a composition bias toward basic and acidic residues. Disordered stretches follow at residues 589–615 (RKDAAAKKREEESKRKEASLQKGMQNM), 636–688 (LQLS…ELQS), 746–782 (ANGTSAHGNRRHASACGTAGAGEKTRDQSLSSSGNRG), and 809–833 (AVPKSKRHQQKSRHKEVNYERCSPA). Polar residues-rich tracts occupy residues 636–645 (LQLSNKQTDL) and 653–666 (VSASQIQLGRNSRG). Positions 812–822 (KSKRHQQKSRH) are enriched in basic residues. The short motif at 944-952 (RKELFRKKN) is the D-box 2 element. The region spanning 951–980 (KNYAATVIQRTWRSYRLRQELSQLLSAKRQ) is the IQ 2 domain.

In terms of assembly, binds calmodulin via its IQ domains. Interacts with APC2.

The protein resides in the cytoplasm. It is found in the cytoskeleton. Functionally, required for normal renal development and establishment of left-right axis. Probably acts as a molecular switch between different Wnt signaling pathways. Inhibits the canonical Wnt pathway by targeting cytoplasmic disheveled for degradation by the ubiquitin-proteasome. This suggests that it is required in renal development to oppose the repression of terminal differentiation of tubular epithelial cells by Wnt signaling. This is Inversin (INVS) from Gallus gallus (Chicken).